A 622-amino-acid polypeptide reads, in one-letter code: Probable potassium transport system protein Kup (622 aa).

The next 12 membrane-spanning stretches (helical) occupy residues Leu9–Leu29, Phe52–Val72, Val101–Pro121, Pro137–Ile157, Phe169–Phe189, Val213–Ala233, Trp247–Leu267, Phe287–Phe309, Ile337–Phe357, Leu363–Cys383, Val396–Val416, and Phe419–Thr439.

The protein belongs to the HAK/KUP transporter (TC 2.A.72) family.

It localises to the cell inner membrane. The catalysed reaction is K(+)(in) + H(+)(in) = K(+)(out) + H(+)(out). Its function is as follows. Transport of potassium into the cell. Likely operates as a K(+):H(+) symporter. In Tolumonas auensis (strain DSM 9187 / NBRC 110442 / TA 4), this protein is Probable potassium transport system protein Kup.